A 294-amino-acid polypeptide reads, in one-letter code: MTKAVLTSISQLALKALLYEVSLSPKPGLVDRFDNGAHDDMSFITFIDSMIALSPFFQAYIETGFAYAKEEPLLLFNRLRQLGQKAEETMFCATQGINTHKGLNFSMALLLGATGAYLARTPHLMTDLGRFSKEDTLAICRLVKPMTAHLIQTDLGHLNTKKEFTYGEQLFVTYGIKGPRGEASEGFTTLTDHALPYFRQMISQNDPETSQLRLLVYLMSIVEDGNLIHRGGIEAWKGVKADMRLLLQQDLSTTDLRLALSSYNQCLINQHLSPGGAADLLALTFYFAFLEKLL.

It belongs to the CitG/MdcB family.

It catalyses the reaction 3'-dephospho-CoA + ATP = 2'-(5''-triphospho-alpha-D-ribosyl)-3'-dephospho-CoA + adenine. This chain is Probable 2-(5''-triphosphoribosyl)-3'-dephosphocoenzyme-A synthase (citG), found in Streptococcus pyogenes serotype M1.